A 610-amino-acid polypeptide reads, in one-letter code: Zinc metalloproteinase-disintegrin-like halysase (610 aa).

A signal peptide spans 1-20 (MIQVLLVTICLAVFPYQGSS). Positions 21 to 182 (IILESGNVND…WESYEPIKKA (162 aa)) are excised as a propeptide. In terms of domain architecture, Peptidase M12B spans 199 to 395 (KYVKLVMVAD…DMPQCILKKP (197 aa)). An N-linked (GlcNAc...) asparagine glycan is attached at N218. 3 cysteine pairs are disulfide-bonded: C310/C390, C350/C374, and C352/C357. Zn(2+) is bound at residue H335. E336 is a catalytic residue. Zn(2+) contacts are provided by H339 and H345. The Disintegrin domain maps to 403–488 (PPVCGNYFVE…AECTDRFQRN (86 aa)). 6 residues coordinate Ca(2+): V405, N408, F410, E412, E415, and D418. Disulfide bonds link C406-C435, C417-C430, C419-C425, C429-C452, C443-C449, C448-C474, C461-C481, C468-C499, C492-C504, C511-C561, C526-C572, C539-C549, C556-C598, and C592-C603. The D/ECD-tripeptide motif lies at 467–469 (ECD).

Belongs to the venom metalloproteinase (M12B) family. P-III subfamily. P-IIIa sub-subfamily. In terms of assembly, monomer. It depends on Zn(2+) as a cofactor. In terms of tissue distribution, expressed by the venom gland.

It localises to the secreted. Its activity is regulated as follows. Inhibited by EDTA and EGTA. Not inhibited by PMSF, antipain, pepstatin, and iodoacetamide. In terms of biological role, strongly inhibits the collagen-induced human platelet aggregation (inhibition of alpha-2/beta-1 (ITGA2/ITGB1) integrin). Hydrolyzes the Aalpha-chain of fibrinogen, without cleavage of Bbeta- and gamma-chains. Degrades type IV collagen (but not types I, II and V), fibronectin and vitronectin and also integrins alpha-1/beta-1 (ITGA1/ITGB1) and alpha-5/beta/1 (ITGA5/ITGB1) (but not alpha-V/beta-3 (ITGAV/ITGB3) and alpha-V/beta-5 (ITGAV/ITGB5) integrins). Both metalloproteinase (peptidase M12B) and disintegrin-like domains (recombinantly expressed and named halydin) play characteristic roles to inhibit human platelet aggregation. Induces apoptosis and strongly inhibits proliferation of endothelial cells as well as adhesion of the cells to extracellular matrix proteins. The apoptosis is closely associated with activation of caspase-3 and decreased level of Bcl-X(L)/Bax. Apohalysase, which lacks metalloprotease activity, is also able to induce the apoptosis. Cleaves insulin B chain at '34-His-|-Leu-35', '37-Glu-|-Ala-38', '38-Ala-|-Leu-39', '39-Leu-|-Tyr-40', '40-Tyr-|-Leu-41', '47-Gly-|-Phe-48' and '48-Phe-|-Phe-49' bonds. The polypeptide is Zinc metalloproteinase-disintegrin-like halysase (Gloydius halys (Chinese water mocassin)).